Here is a 183-residue protein sequence, read N- to C-terminus: ATP-dependent protease subunit HslV (183 aa).

Residue T13 is part of the active site. 3 residues coordinate Na(+): G168, C171, and T174.

It belongs to the peptidase T1B family. HslV subfamily. In terms of assembly, a double ring-shaped homohexamer of HslV is capped on each side by a ring-shaped HslU homohexamer. The assembly of the HslU/HslV complex is dependent on binding of ATP.

The protein resides in the cytoplasm. It carries out the reaction ATP-dependent cleavage of peptide bonds with broad specificity.. Allosterically activated by HslU binding. Its function is as follows. Protease subunit of a proteasome-like degradation complex believed to be a general protein degrading machinery. This Xanthomonas campestris pv. campestris (strain ATCC 33913 / DSM 3586 / NCPPB 528 / LMG 568 / P 25) protein is ATP-dependent protease subunit HslV.